Reading from the N-terminus, the 263-residue chain is Rhomboid-like protease 3 (263 aa).

6 helical membrane-spanning segments follow: residues 37–57 (KSIV…CVLS), 86–106 (VVTP…LVFI), 121–141 (KFLV…MLMQ), 142–162 (PWAL…GMAA), 189–209 (LIYF…GGFL), and 231–251 (VLFY…PPLL). The active-site Nucleophile is the serine 150. Histidine 204 is a catalytic residue.

This sequence belongs to the peptidase S54 family.

Its subcellular location is the membrane. The enzyme catalyses Cleaves type-1 transmembrane domains using a catalytic dyad composed of serine and histidine that are contributed by different transmembrane domains.. Its function is as follows. Serine protease involved in intramembrane proteolysis and the subsequent release of polypeptides from their membrane anchors. This Toxoplasma gondii protein is Rhomboid-like protease 3 (ROM3).